Reading from the N-terminus, the 252-residue chain is 5-oxoprolinase subunit A (252 aa).

Belongs to the LamB/PxpA family. In terms of assembly, forms a complex composed of PxpA, PxpB and PxpC.

The enzyme catalyses 5-oxo-L-proline + ATP + 2 H2O = L-glutamate + ADP + phosphate + H(+). Its function is as follows. Catalyzes the cleavage of 5-oxoproline to form L-glutamate coupled to the hydrolysis of ATP to ADP and inorganic phosphate. The chain is 5-oxoprolinase subunit A from Mycobacterium leprae (strain Br4923).